Consider the following 284-residue polypeptide: Bifunctional protein FolD (284 aa).

Residues 165-167 (GRS) and S190 each bind NADP(+).

The protein belongs to the tetrahydrofolate dehydrogenase/cyclohydrolase family. In terms of assembly, homodimer.

It carries out the reaction (6R)-5,10-methylene-5,6,7,8-tetrahydrofolate + NADP(+) = (6R)-5,10-methenyltetrahydrofolate + NADPH. The enzyme catalyses (6R)-5,10-methenyltetrahydrofolate + H2O = (6R)-10-formyltetrahydrofolate + H(+). The protein operates within one-carbon metabolism; tetrahydrofolate interconversion. Functionally, catalyzes the oxidation of 5,10-methylenetetrahydrofolate to 5,10-methenyltetrahydrofolate and then the hydrolysis of 5,10-methenyltetrahydrofolate to 10-formyltetrahydrofolate. This chain is Bifunctional protein FolD, found in Streptococcus pyogenes serotype M28 (strain MGAS6180).